We begin with the raw amino-acid sequence, 210 residues long: Ribosomal RNA large subunit methyltransferase E (210 aa).

S-adenosyl-L-methionine is bound by residues glycine 64, tryptophan 66, aspartate 84, asparagine 100, and aspartate 125. Catalysis depends on lysine 165, which acts as the Proton acceptor.

Belongs to the class I-like SAM-binding methyltransferase superfamily. RNA methyltransferase RlmE family.

Its subcellular location is the cytoplasm. It catalyses the reaction uridine(2552) in 23S rRNA + S-adenosyl-L-methionine = 2'-O-methyluridine(2552) in 23S rRNA + S-adenosyl-L-homocysteine + H(+). In terms of biological role, specifically methylates the uridine in position 2552 of 23S rRNA at the 2'-O position of the ribose in the fully assembled 50S ribosomal subunit. This chain is Ribosomal RNA large subunit methyltransferase E, found in Buchnera aphidicola subsp. Baizongia pistaciae (strain Bp).